We begin with the raw amino-acid sequence, 126 residues long: Ribosome-binding factor A (126 aa).

The protein belongs to the RbfA family. As to quaternary structure, monomer. Binds 30S ribosomal subunits, but not 50S ribosomal subunits or 70S ribosomes.

The protein resides in the cytoplasm. Its function is as follows. One of several proteins that assist in the late maturation steps of the functional core of the 30S ribosomal subunit. Associates with free 30S ribosomal subunits (but not with 30S subunits that are part of 70S ribosomes or polysomes). Required for efficient processing of 16S rRNA. May interact with the 5'-terminal helix region of 16S rRNA. This is Ribosome-binding factor A from Nitrosospira multiformis (strain ATCC 25196 / NCIMB 11849 / C 71).